Here is a 158-residue protein sequence, read N- to C-terminus: MAEEKSFPMTADGKAKLEQELEDLRLVRRPEVINRIKIARSYGDLSENSEYESAKDEQAFVEGRISQIETMLQYAVIIDNEDVAADEVSMGREITFQELPDEEPESYTIVGESESDPLSGKISNESPMAKGLLGHKVGDTVEIEIPNGSMKVKILSVK.

A coiled-coil region spans residues 49-69 (SEYESAKDEQAFVEGRISQIE). The tract at residues 102 to 125 (EEPESYTIVGESESDPLSGKISNE) is disordered.

Belongs to the GreA/GreB family.

In terms of biological role, necessary for efficient RNA polymerase transcription elongation past template-encoded arresting sites. The arresting sites in DNA have the property of trapping a certain fraction of elongating RNA polymerases that pass through, resulting in locked ternary complexes. Cleavage of the nascent transcript by cleavage factors such as GreA or GreB allows the resumption of elongation from the new 3'terminus. GreA releases sequences of 2 to 3 nucleotides. The chain is Transcription elongation factor GreA from Limosilactobacillus fermentum (strain NBRC 3956 / LMG 18251) (Lactobacillus fermentum).